The sequence spans 220 residues: Charged multivesicular body protein 3 (220 aa).

Residue glycine 2 is the site of N-myristoyl glycine attachment. Residues 22 to 54 (KIRKEMRVIDRQIRDIQREQEKVKRSIKESAKK) are a coiled coil. Positions 168 to 169 (IL) are important for autoinhibitory function. The disordered stretch occupies residues 196-220 (AMAASDEEEEEDLEAMQSRLAALRS). Residues 197–220 (MAASDEEEEEDLEAMQSRLAALRS) are a coiled coil. A compositionally biased stretch (acidic residues) spans 200–209 (SDEEEEEDLE). The MIT-interacting motif signature appears at 201–209 (DEEEEEDLE). Interaction with STAMBP stretches follow at residues 203–207 (EEEED) and 219–220 (RS).

The protein belongs to the SNF7 family. Probable core component of the endosomal sorting required for transport complex III (ESCRT-III). ESCRT-III components are thought to multimerize to form a flat lattice on the perimeter membrane of the endosome. Several assembly forms of ESCRT-III may exist that interact and act sequentially.

The protein resides in the cytoplasm. It localises to the cytosol. Its subcellular location is the membrane. It is found in the endosome. The protein localises to the late endosome membrane. Its function is as follows. Probable core component of the endosomal sorting required for transport complex III (ESCRT-III) which is involved in multivesicular bodies (MVBs) formation and sorting of endosomal cargo proteins into MVBs. MVBs contain intraluminal vesicles (ILVs) that are generated by invagination and scission from the limiting membrane of the endosome and mostly are delivered to lysosomes enabling degradation of membrane proteins, such as stimulated growth factor receptors, lysosomal enzymes and lipids. Involved in late stages of cytokinesis. Plays a role in endosomal sorting/trafficking of EGF receptor. The sequence is that of Charged multivesicular body protein 3 (chmp3) from Xenopus tropicalis (Western clawed frog).